Here is a 153-residue protein sequence, read N- to C-terminus: Putative pre-16S rRNA nuclease (153 aa).

Belongs to the YqgF nuclease family.

The protein resides in the cytoplasm. Functionally, could be a nuclease involved in processing of the 5'-end of pre-16S rRNA. In Prochlorococcus marinus (strain AS9601), this protein is Putative pre-16S rRNA nuclease.